The primary structure comprises 584 residues: uncharacterized protein (584 aa).

The chain crosses the membrane as a helical span at residues 15–35 (FIFFVLVFFICIIFGCIYESL). Composition is skewed to polar residues over residues 184-194 (DVSTENSYTHN) and 204-225 (GKRTYNNQSNNNLPYDNSSYNI). The tract at residues 184 to 226 (DVSTENSYTHNNSRDDEPQNGKRTYNNQSNNNLPYDNSSYNIS) is disordered. 2 coiled-coil regions span residues 267–319 (DNYP…DNYP) and 436–477 (RDNH…HYKR).

Its subcellular location is the membrane. This is an uncharacterized protein from Plasmodium falciparum (isolate 3D7).